Reading from the N-terminus, the 254-residue chain is Hydroxypyruvate/pyruvate aldolase (254 aa).

Residue H47 is the Proton acceptor of the active site. A divalent metal cation-binding residues include E151 and D177.

It belongs to the HpcH/HpaI aldolase family. The cofactor is a divalent metal cation.

The catalysed reaction is D-glyceraldehyde + pyruvate = 2-dehydro-3-deoxy-L-galactonate. Its function is as follows. Aldolase which can catalyze in vitro the aldolisation reaction between hydroxypyruvate (HPA) or pyruvate (PA) and D-glyceraldehyde (D-GA). The condensation of pyruvate and D-glyceraldehyde produces 2-dehydro-3-deoxy-L-galactonate as the major product. Has weak activity with hydroxypyruvate and D-glyceraldehyde. This Chromohalobacter salexigens (strain ATCC BAA-138 / DSM 3043 / CIP 106854 / NCIMB 13768 / 1H11) protein is Hydroxypyruvate/pyruvate aldolase.